A 261-amino-acid chain; its full sequence is 8-demethyl-8-(2,3-dimethoxy-alpha-L-rhamnosyl)-tetracenomycin-C 4'-O-methyltransferase (261 aa).

S-adenosyl-L-methionine is bound by residues 53–54 (TM), 81–85 (ETGVW), 111–115 (DSFEG), Phe-167, 185–186 (DG), and Ser-191. Asp-185 lines the Mg(2+) pocket. Mg(2+)-binding residues include Asp-212 and Asp-213.

This sequence belongs to the methyltransferase TylF/MycF family. Mg(2+) is required as a cofactor.

It catalyses the reaction 8-demethyl-8-(2,3-di-O-methyl-alpha-L-rhamnosyl)-tetracenomycin C + S-adenosyl-L-methionine = 8-demethyl-8-(2,3,4-tri-O-methyl-alpha-L-rhamnosyl)-tetracenomycin C + S-adenosyl-L-homocysteine + H(+). The protein operates within antibiotic biosynthesis. O-methyltransferase involved in the biosynthesis of the permethylated L-rhamnose moiety of elloramycin, an antitumor polyketide. Mediates the methylation of the hydroxy groups at the 4'-position after the sugar moiety has been attached to the aglycon. The polypeptide is 8-demethyl-8-(2,3-dimethoxy-alpha-L-rhamnosyl)-tetracenomycin-C 4'-O-methyltransferase (Streptomyces olivaceus).